The sequence spans 277 residues: Glutamate racemase (277 aa).

Substrate contacts are provided by residues 16-17 and 48-49; these read DS and YG. Residue Cys79 is the Proton donor/acceptor of the active site. 80 to 81 contacts substrate; that stretch reads NT. Residue Cys191 is the Proton donor/acceptor of the active site. A substrate-binding site is contributed by 192–193; that stretch reads TH.

This sequence belongs to the aspartate/glutamate racemases family.

It catalyses the reaction L-glutamate = D-glutamate. It participates in cell wall biogenesis; peptidoglycan biosynthesis. Its function is as follows. Provides the (R)-glutamate required for cell wall biosynthesis. The sequence is that of Glutamate racemase from Symbiobacterium thermophilum (strain DSM 24528 / JCM 14929 / IAM 14863 / T).